The primary structure comprises 232 residues: Ubiquinone biosynthesis O-methyltransferase (232 aa).

S-adenosyl-L-methionine-binding residues include Arg36, Gly55, Asp76, and Leu120.

Belongs to the methyltransferase superfamily. UbiG/COQ3 family.

It catalyses the reaction a 3-demethylubiquinol + S-adenosyl-L-methionine = a ubiquinol + S-adenosyl-L-homocysteine + H(+). The enzyme catalyses a 3-(all-trans-polyprenyl)benzene-1,2-diol + S-adenosyl-L-methionine = a 2-methoxy-6-(all-trans-polyprenyl)phenol + S-adenosyl-L-homocysteine + H(+). The protein operates within cofactor biosynthesis; ubiquinone biosynthesis. In terms of biological role, O-methyltransferase that catalyzes the 2 O-methylation steps in the ubiquinone biosynthetic pathway. This chain is Ubiquinone biosynthesis O-methyltransferase, found in Pseudomonas fluorescens (strain SBW25).